Reading from the N-terminus, the 251-residue chain is Hydroxyacylglutathione hydrolase (251 aa).

Zn(2+) contacts are provided by His-53, His-55, Asp-57, His-58, His-110, Asp-127, and His-165.

The protein belongs to the metallo-beta-lactamase superfamily. Glyoxalase II family. As to quaternary structure, monomer. It depends on Zn(2+) as a cofactor.

The catalysed reaction is an S-(2-hydroxyacyl)glutathione + H2O = a 2-hydroxy carboxylate + glutathione + H(+). The protein operates within secondary metabolite metabolism; methylglyoxal degradation; (R)-lactate from methylglyoxal: step 2/2. In terms of biological role, thiolesterase that catalyzes the hydrolysis of S-D-lactoyl-glutathione to form glutathione and D-lactic acid. The polypeptide is Hydroxyacylglutathione hydrolase (Escherichia fergusonii (strain ATCC 35469 / DSM 13698 / CCUG 18766 / IAM 14443 / JCM 21226 / LMG 7866 / NBRC 102419 / NCTC 12128 / CDC 0568-73)).